A 215-amino-acid chain; its full sequence is Octanoyltransferase (215 aa).

In terms of domain architecture, BPL/LPL catalytic spans 33–209 (PDTPDQLWLV…QFARKLGYET (177 aa)). Substrate-binding positions include 72-79 (RGGQVTYH), 139-141 (SLG), and 152-154 (GLA). Catalysis depends on C170, which acts as the Acyl-thioester intermediate.

It belongs to the LipB family.

Its subcellular location is the cytoplasm. The catalysed reaction is octanoyl-[ACP] + L-lysyl-[protein] = N(6)-octanoyl-L-lysyl-[protein] + holo-[ACP] + H(+). The protein operates within protein modification; protein lipoylation via endogenous pathway; protein N(6)-(lipoyl)lysine from octanoyl-[acyl-carrier-protein]: step 1/2. Catalyzes the transfer of endogenously produced octanoic acid from octanoyl-acyl-carrier-protein onto the lipoyl domains of lipoate-dependent enzymes. Lipoyl-ACP can also act as a substrate although octanoyl-ACP is likely to be the physiological substrate. The protein is Octanoyltransferase of Cellvibrio japonicus (strain Ueda107) (Pseudomonas fluorescens subsp. cellulosa).